A 382-amino-acid polypeptide reads, in one-letter code: Protein shisa-9A (382 aa).

Positions 1–26 (MKWTVLLLEYFLVKVLVLLYSADGEA) are cleaved as a signal peptide. At 27–132 (QQLEGFIMLS…DPRHDPTKDK (106 aa)) the chain is on the extracellular side. An N-linked (GlcNAc...) asparagine glycan is attached at asparagine 39. Residues 133–153 (TNLIVYIICGVVAIMALVGIF) traverse the membrane as a helical segment. Over 154-382 (TKLGLEKAHR…VTNSKAEVTV (229 aa)) the chain is Cytoplasmic.

This sequence belongs to the shisa family. SHISA9 subfamily. In terms of assembly, component of some AMPA receptors (ionotropic glutamate receptors) complex.

The protein localises to the cell projection. It localises to the dendritic spine membrane. Its subcellular location is the synapse. In terms of biological role, regulator of short-term neuronal synaptic plasticity in the dentate gyrus. Associates with AMPA receptors (ionotropic glutamate receptors) in synaptic spines and promotes AMPA receptor desensitization at excitatory synapses. This chain is Protein shisa-9A (shisa9a), found in Danio rerio (Zebrafish).